The primary structure comprises 463 residues: ATP-dependent protease ATPase subunit HslU (463 aa).

ATP is bound by residues isoleucine 19, 61–66 (GVGKTE), aspartate 277, glutamate 341, and arginine 413.

This sequence belongs to the ClpX chaperone family. HslU subfamily. A double ring-shaped homohexamer of HslV is capped on each side by a ring-shaped HslU homohexamer. The assembly of the HslU/HslV complex is dependent on binding of ATP.

Its subcellular location is the cytoplasm. Functionally, ATPase subunit of a proteasome-like degradation complex; this subunit has chaperone activity. The binding of ATP and its subsequent hydrolysis by HslU are essential for unfolding of protein substrates subsequently hydrolyzed by HslV. HslU recognizes the N-terminal part of its protein substrates and unfolds these before they are guided to HslV for hydrolysis. This is ATP-dependent protease ATPase subunit HslU from Bacillus cereus (strain ATCC 14579 / DSM 31 / CCUG 7414 / JCM 2152 / NBRC 15305 / NCIMB 9373 / NCTC 2599 / NRRL B-3711).